Here is a 340-residue protein sequence, read N- to C-terminus: Phospho-N-acetylmuramoyl-pentapeptide-transferase (340 aa).

Helical transmembrane passes span 22–42 (VVVP…LLIP), 69–89 (TMGG…WSGW), 95–115 (AVAL…WLVI), 129–149 (LLLQ…QGIP), 156–176 (GIGT…VLVG), 186–206 (GMDG…GLLH), 209–229 (PELS…LVHN), 235–257 (LFMG…LLGD), and 316–336 (VVGS…AWWH).

It belongs to the glycosyltransferase 4 family. MraY subfamily. Mg(2+) serves as cofactor.

It localises to the cell inner membrane. It catalyses the reaction UDP-N-acetyl-alpha-D-muramoyl-L-alanyl-gamma-D-glutamyl-meso-2,6-diaminopimeloyl-D-alanyl-D-alanine + di-trans,octa-cis-undecaprenyl phosphate = di-trans,octa-cis-undecaprenyl diphospho-N-acetyl-alpha-D-muramoyl-L-alanyl-D-glutamyl-meso-2,6-diaminopimeloyl-D-alanyl-D-alanine + UMP. Its pathway is cell wall biogenesis; peptidoglycan biosynthesis. Functionally, catalyzes the initial step of the lipid cycle reactions in the biosynthesis of the cell wall peptidoglycan: transfers peptidoglycan precursor phospho-MurNAc-pentapeptide from UDP-MurNAc-pentapeptide onto the lipid carrier undecaprenyl phosphate, yielding undecaprenyl-pyrophosphoryl-MurNAc-pentapeptide, known as lipid I. The polypeptide is Phospho-N-acetylmuramoyl-pentapeptide-transferase (Synechococcus sp. (strain JA-2-3B'a(2-13)) (Cyanobacteria bacterium Yellowstone B-Prime)).